The sequence spans 188 residues: Phosphoribosylglycinamide formyltransferase (188 aa).

12 to 14 (GSN) is a N(1)-(5-phospho-beta-D-ribosyl)glycinamide binding site. Residues K66, 91-94 (MRLI), and N108 each bind (6R)-10-formyltetrahydrofolate. The active-site Proton donor is the H110.

The protein belongs to the GART family.

The catalysed reaction is N(1)-(5-phospho-beta-D-ribosyl)glycinamide + (6R)-10-formyltetrahydrofolate = N(2)-formyl-N(1)-(5-phospho-beta-D-ribosyl)glycinamide + (6S)-5,6,7,8-tetrahydrofolate + H(+). It functions in the pathway purine metabolism; IMP biosynthesis via de novo pathway; N(2)-formyl-N(1)-(5-phospho-D-ribosyl)glycinamide from N(1)-(5-phospho-D-ribosyl)glycinamide (10-formyl THF route): step 1/1. In terms of biological role, catalyzes the transfer of a formyl group from 10-formyltetrahydrofolate to 5-phospho-ribosyl-glycinamide (GAR), producing 5-phospho-ribosyl-N-formylglycinamide (FGAR) and tetrahydrofolate. The protein is Phosphoribosylglycinamide formyltransferase of Staphylococcus aureus (strain MSSA476).